The following is a 552-amino-acid chain: Probable ABC transporter ATP-binding/permease protein HI_0664 (552 aa).

The next 6 helical transmembrane spans lie at 22 to 42 (IMAFTITMGTLGFLAAIFIMV), 52 to 72 (LNFDTHLSFSGILTALIVLAV), 139 to 159 (IAPIMIAFFTSAILLLVFAQL), 162 to 182 (WFVLVALAAYLTVGVILPIIT), 253 to 273 (EVAVSVFNIIMLFTGLILFSL), and 278 to 298 (FAAFLIGVILLMSSYGPVIAL). Residues 23-307 (MAFTITMGTL…LSNLSSNLLQ (285 aa)) enclose the ABC transmembrane type-1 domain. An ABC transporter domain is found at 340–552 (IDVENVNFAY…VIGIENGRMS (213 aa)). 372–379 (GRSGSGKS) is a binding site for ATP.

The protein belongs to the ABC transporter superfamily. Lipid exporter (TC 3.A.1.106) family.

The protein resides in the cell inner membrane. The protein is Probable ABC transporter ATP-binding/permease protein HI_0664 of Haemophilus influenzae (strain ATCC 51907 / DSM 11121 / KW20 / Rd).